Consider the following 398-residue polypeptide: 1-deoxy-D-xylulose 5-phosphate reductoisomerase (398 aa).

7 residues coordinate NADPH: T11, G12, S13, I14, R38, N39, and N125. Residue K126 coordinates 1-deoxy-D-xylulose 5-phosphate. Residue E127 coordinates NADPH. Residue D151 participates in Mn(2+) binding. 1-deoxy-D-xylulose 5-phosphate contacts are provided by S152, E153, S179, and H202. E153 lines the Mn(2+) pocket. G208 is a binding site for NADPH. Residues S215, N220, K221, and E224 each contribute to the 1-deoxy-D-xylulose 5-phosphate site. Position 224 (E224) interacts with Mn(2+).

Belongs to the DXR family. Mg(2+) is required as a cofactor. The cofactor is Mn(2+).

The catalysed reaction is 2-C-methyl-D-erythritol 4-phosphate + NADP(+) = 1-deoxy-D-xylulose 5-phosphate + NADPH + H(+). It participates in isoprenoid biosynthesis; isopentenyl diphosphate biosynthesis via DXP pathway; isopentenyl diphosphate from 1-deoxy-D-xylulose 5-phosphate: step 1/6. Its function is as follows. Catalyzes the NADPH-dependent rearrangement and reduction of 1-deoxy-D-xylulose-5-phosphate (DXP) to 2-C-methyl-D-erythritol 4-phosphate (MEP). The sequence is that of 1-deoxy-D-xylulose 5-phosphate reductoisomerase from Burkholderia mallei (strain NCTC 10247).